The primary structure comprises 288 residues: Acetyl-coenzyme A carboxylase carboxyl transferase subunit beta (288 aa).

The CoA carboxyltransferase N-terminal domain occupies 33-288 (LFSQCPGCKH…LVRLHGGSPR (256 aa)). Zn(2+)-binding residues include Cys-37, Cys-40, Cys-55, and Cys-58. The segment at 37 to 58 (CPGCKHTIYQKDLGSERICPHC) adopts a C4-type zinc-finger fold.

This sequence belongs to the AccD/PCCB family. Acetyl-CoA carboxylase is a heterohexamer composed of biotin carboxyl carrier protein (AccB), biotin carboxylase (AccC) and two subunits each of ACCase subunit alpha (AccA) and ACCase subunit beta (AccD). Zn(2+) serves as cofactor.

The protein localises to the cytoplasm. It carries out the reaction N(6)-carboxybiotinyl-L-lysyl-[protein] + acetyl-CoA = N(6)-biotinyl-L-lysyl-[protein] + malonyl-CoA. The protein operates within lipid metabolism; malonyl-CoA biosynthesis; malonyl-CoA from acetyl-CoA: step 1/1. Functionally, component of the acetyl coenzyme A carboxylase (ACC) complex. Biotin carboxylase (BC) catalyzes the carboxylation of biotin on its carrier protein (BCCP) and then the CO(2) group is transferred by the transcarboxylase to acetyl-CoA to form malonyl-CoA. In Streptococcus pneumoniae serotype 4 (strain ATCC BAA-334 / TIGR4), this protein is Acetyl-coenzyme A carboxylase carboxyl transferase subunit beta.